The chain runs to 1282 residues: ATP-dependent helicase/nuclease subunit A (1282 aa).

Residues 10–481 (SKWTDSQRQV…IELQENFRSS (472 aa)) enclose the UvrD-like helicase ATP-binding domain. Residue 31–38 (AGAGAGKT) participates in ATP binding. Residues 516–820 (KPRELYLNED…RLMSIHKSKG (305 aa)) enclose the UvrD-like helicase C-terminal domain.

This sequence belongs to the helicase family. AddA subfamily. Heterodimer of AddA and AddB/RexB. It depends on Mg(2+) as a cofactor.

The enzyme catalyses Couples ATP hydrolysis with the unwinding of duplex DNA by translocating in the 3'-5' direction.. It catalyses the reaction ATP + H2O = ADP + phosphate + H(+). Functionally, the heterodimer acts as both an ATP-dependent DNA helicase and an ATP-dependent, dual-direction single-stranded exonuclease. Recognizes the chi site generating a DNA molecule suitable for the initiation of homologous recombination. The AddA nuclease domain is required for chi fragment generation; this subunit has the helicase and 3' -&gt; 5' nuclease activities. This is ATP-dependent helicase/nuclease subunit A from Natranaerobius thermophilus (strain ATCC BAA-1301 / DSM 18059 / JW/NM-WN-LF).